The primary structure comprises 776 residues: Cullin-1 (776 aa).

Omega-N-methylarginine is present on arginine 63. One can recognise a Cullin neddylation domain in the interval 706-766; it reads DRKLLIQAAI…IEKEYLERVD (61 aa). Residue lysine 720 forms a Glycyl lysine isopeptide (Lys-Gly) (interchain with G-Cter in NEDD8) linkage.

This sequence belongs to the cullin family. Component of multiple Cul1-RING E3 ubiquitin-protein ligase complexes commonly known as SCF (SKP1-CUL1-F-box) complexes, consisting of CUL1, SKP1, RBX1 and a variable F-box domain-containing protein as substrate-specific subunit. Component of the SCF(FBXW11) complex containing FBXW11. Component of the SCF(SKP2) complex containing SKP2, in which it interacts directly with SKP1, SKP2 and RBX1. Component of the SCF(FBXW2) complex containing FBXW2. Component of the SCF(FBXO32) complex containing FBXO32. Component of the probable SCF(FBXO7) complex containing FBXO7. Component of the SCF(FBXO10) complex containing FBXO10. Component of the SCF(FBXO11) complex containing FBXO11. Component of the SCF(FBXO25) complex containing FBXO25. Component of the SCF(FBXO33) complex containing FBXO33. Component of the probable SCF(FBXO4) complex containing FBXO4. Component of the SCF(FBXO44) complex, composed of SKP1, CUL1 and FBXO44. Component of the SCF(BTRC) complex, composed of SKP1, CUL1 and BTRC. This complex binds phosphorylated NFKBIA. Part of a SCF complex consisting of CUL1, RBX1, SKP1 and FBXO2. Component of a SCF(SKP2)-like complex containing CUL1, SKP1, TRIM21 and SKP2. Component of the SCF(FBXO17) complex, composed of SKP1, CUL1 and FBXO17. Component of the SCF(FBXO27) complex, composed of SKP1, CUL1 and FBXO27. Component of the SCF(CCNF) complex consisting of CUL1, RBX1, SKP1 and CCNF. Interacts with CCNF. Component of the SCF(FBXL3) complex composed of CUL1, SKP1, RBX1 and FBXL3. Component of the SCF(FBXL21) complex composed of CUL1, SKP1, RBX1 and FBXL21. Component of the SCF(FBXO9) composed of CUL1, SKP1, RBX1 and FBXO9. Component of the SCF(FBXW7) composed of CUL1, SKP1, RBX1 and FBXW7. Component of the SCF(FBXO31) complex composed of CUL1, SKP1, RBX1 and FBXO31. Interacts with CHEK2; mediates CHEK2 ubiquitination and regulates its function. Part of a complex with TIP120A/CAND1 and RBX1. The unneddylated form interacts with TIP120A/CAND1 and the interaction mediates the exchange of the F-box substrate-specific subunit. Can self-associate. Interacts with FBXW8. Interacts with RNF7. Interacts with TRIM21. Interacts with COPS2. Interacts with UBE2M. Identified in a complex with RBX1 and GLMN. Interacts with CEP68 as part of the SCF(FBXW11) complex; the interaction is probably mediated by FBXW11 and the complex also contains CDK5RAP2 and PCNT. Interacts (when neddylated) with ARIH1; leading to activate the E3 ligase activity of ARIH1. Interacts with COPS9 isoform 2. Interacts with UBXN1. Interacts with KAT7, probably as part of an SCF complex; the interaction mediates KAT7 ubiquitination. Interacts with NOTCH2. Part of a complex that contains DCUN1D5, CUL1 and RBX1; this complex is bridged by CUL1. Interacts (unneddylated form) with DCUN1D1, DCUN1D2, DCUN1D3, DCUN1D4 and DCUN1D5; these interactions promote the cullin neddylation. Interacts (via the C-terminal domain) with CUL7; the interaction seems to be mediated by FBXW8; it is likely specific to FBXW8, but not other F-box proteins. Interacts with UBR2, as part of SCF(BTRC) complex; the interaction mediates 'Lys-48'-linked ubiquitination of UBR2 and is regulated by DUSP22 in the T-cell receptor signaling pathway. In terms of assembly, (Microbial infection) Interacts with Epstein-Barr virus BPLF1. As to quaternary structure, (Microbial infection) Interacts with Human adenovirus early E1A protein; this interaction inhibits RBX1-CUL1-dependent elongation reaction of ubiquitin chains by the SCF(FBXW7) complex. (Microbial infection) Interacts with vaccinia virus protein C9L. In terms of assembly, (Microbial infection) Interacts with Epstein-Barr virus (EBV) tegument protein BGLF2; this interaction might facilitate CUL1 recruitment to STAT2, leading to ubiquitination and degradation of the latter. Neddylated; which enhances the ubiquitination activity of SCF. Neddylation prevents binding of the inhibitor CAND1. Neddylation leads to structural rearrangment in the complex that allows interaction between the E2 ubiquitin-conjugating enzyme and the acceptor ubiquitin. Deneddylated via its interaction with the COP9 signalosome (CSN) complex. In terms of processing, (Microbial infection) Deneddylated by Epstein-Barr virus BPLF1 leading to a S-phase-like environment that is required for efficient replication of the viral genome. In terms of tissue distribution, expressed in lung fibroblasts.

It participates in protein modification; protein ubiquitination. In terms of biological role, core component of multiple cullin-RING-based SCF (SKP1-CUL1-F-box protein) E3 ubiquitin-protein ligase complexes, which mediate the ubiquitination of proteins involved in cell cycle progression, signal transduction and transcription. SCF complexes and ARIH1 collaborate in tandem to mediate ubiquitination of target proteins. In the SCF complex, serves as a rigid scaffold that organizes the SKP1-F-box protein and RBX1 subunits. May contribute to catalysis through positioning of the substrate and the ubiquitin-conjugating enzyme. The E3 ubiquitin-protein ligase activity of the complex is dependent on the neddylation of the cullin subunit and exchange of the substrate recognition component is mediated by TIP120A/CAND1. The functional specificity of the SCF complex depends on the F-box protein as substrate recognition component. SCF(BTRC) and SCF(FBXW11) direct ubiquitination of CTNNB1 and participate in Wnt signaling. SCF(FBXW11) directs ubiquitination of phosphorylated NFKBIA. SCF(BTRC) directs ubiquitination of NFKBIB, NFKBIE, ATF4, SMAD3, SMAD4, CDC25A, FBXO5 and probably NFKB2. SCF(BTRC) and/or SCF(FBXW11) direct ubiquitination of CEP68. SCF(SKP2) directs ubiquitination of phosphorylated CDKN1B/p27kip and is involved in regulation of G1/S transition. SCF(SKP2) directs ubiquitination of ORC1, CDT1, RBL2, ELF4, CDKN1A, RAG2, FOXO1A, and probably MYC and TAL1. SCF(FBXW7) directs ubiquitination of CCNE1, NOTCH1 released notch intracellular domain (NICD), and probably PSEN1. SCF(FBXW2) directs ubiquitination of GCM1. SCF(FBXO32) directs ubiquitination of MYOD1. SCF(FBXO7) directs ubiquitination of BIRC2 and DLGAP5. SCF(FBXO33) directs ubiquitination of YBX1. SCF(FBXO1) directs ubiquitination of BCL6 and DTL but does not seem to direct ubiquitination of TP53. SCF(BTRC) mediates the ubiquitination of NFKBIA at 'Lys-21' and 'Lys-22'; the degradation frees the associated NFKB1-RELA dimer to translocate into the nucleus and to activate transcription. SCF(CCNF) directs ubiquitination of CCP110. SCF(FBXL3) and SCF(FBXL21) direct ubiquitination of CRY1 and CRY2. SCF(FBXO9) directs ubiquitination of TTI1 and TELO2. SCF(FBXO10) directs ubiquitination of BCL2. Neddylated CUL1-RBX1 ubiquitinates p53/TP53 recruited by Cul7-RING(FBXW8) complex. SCF(BTRC) directs 'Lys-48'-linked ubiquitination of UBR2 in the T-cell receptor signaling pathway. The SCF(FBXO31) protein ligase complex specifically mediates the ubiquitination of proteins amidated at their C-terminus in response to oxidative stress. The chain is Cullin-1 (CUL1) from Homo sapiens (Human).